The sequence spans 241 residues: GTP cyclohydrolase III (241 aa).

It belongs to the archaeal-type GTP cyclohydrolase family.

It catalyses the reaction GTP + 3 H2O = 2-amino-5-formylamino-6-(5-phospho-D-ribosylamino)pyrimidin-4(3H)-one + 2 phosphate + 2 H(+). Catalyzes the formation of 2-amino-5-formylamino-6-ribofuranosylamino-4(3H)-pyrimidinone ribonucleotide monophosphate and inorganic phosphate from GTP. Also has an independent pyrophosphate phosphohydrolase activity. This Aeropyrum pernix (strain ATCC 700893 / DSM 11879 / JCM 9820 / NBRC 100138 / K1) protein is GTP cyclohydrolase III.